A 372-amino-acid chain; its full sequence is MRSKVTGAQRWVVKIGSALLTADGKGLDRTAMGVWVEQMVALHEAGVELVLVSSGAVAAGMSRLGWTARPSAMHELQAAAAIGQMGLVQAWESSFAEHGRHTAQILLTHDDLSDRKRYLNARSTLRALVELKVIPVINENDTVVTDEIRFGDNDTLAALVANLVEADLLVILTDRDGMFDADPRNNPDAQLIYEARADDPALDAVAGGTGGALGRGGMQTKLRAARLAARSGAHTIIVGGRLDRVLDRLKAGERIGTLLSPERGMLAARKQWLAGHLQTRGTLVLDEGAVSALSQGNKSLLPVGVKQVQGGFRRGEMVVCVAPDGREIARGLANYSALEAQKIIGQPSDAIVGVLGYMAEPELVHRDNLILV.

Lys-14 contributes to the ATP binding site. The substrate site is built by Ser-54, Asp-141, and Asn-153. Thr-173–Asp-174 serves as a coordination point for ATP. A PUA domain is found at Arg-280–Met-358.

Belongs to the glutamate 5-kinase family.

It localises to the cytoplasm. The enzyme catalyses L-glutamate + ATP = L-glutamyl 5-phosphate + ADP. It participates in amino-acid biosynthesis; L-proline biosynthesis; L-glutamate 5-semialdehyde from L-glutamate: step 1/2. Catalyzes the transfer of a phosphate group to glutamate to form L-glutamate 5-phosphate. The polypeptide is Glutamate 5-kinase (Pseudomonas fluorescens (strain ATCC BAA-477 / NRRL B-23932 / Pf-5)).